Here is a 193-residue protein sequence, read N- to C-terminus: dTTP/UTP pyrophosphatase (193 aa).

Asp-77 acts as the Proton acceptor in catalysis.

This sequence belongs to the Maf family. YhdE subfamily. A divalent metal cation serves as cofactor.

The protein localises to the cytoplasm. It carries out the reaction dTTP + H2O = dTMP + diphosphate + H(+). It catalyses the reaction UTP + H2O = UMP + diphosphate + H(+). Functionally, nucleoside triphosphate pyrophosphatase that hydrolyzes dTTP and UTP. May have a dual role in cell division arrest and in preventing the incorporation of modified nucleotides into cellular nucleic acids. This chain is dTTP/UTP pyrophosphatase, found in Bacteroides fragilis (strain YCH46).